Here is a 149-residue protein sequence, read N- to C-terminus: Large ribosomal subunit protein uL13 (149 aa).

It belongs to the universal ribosomal protein uL13 family. As to quaternary structure, part of the 50S ribosomal subunit.

This protein is one of the early assembly proteins of the 50S ribosomal subunit, although it is not seen to bind rRNA by itself. It is important during the early stages of 50S assembly. The protein is Large ribosomal subunit protein uL13 of Cyanothece sp. (strain PCC 7425 / ATCC 29141).